The sequence spans 814 residues: Protein kinase C-binding protein NELL2 (814 aa).

A signal peptide spans 1–19; it reads MEFILGIFCVLFCLRAGAG. Residues Asn-51, Asn-223, and Asn-296 are each glycosylated (N-linked (GlcNAc...) asparagine). The region spanning 53 to 226 is the Laminin G-like domain; it reads SKAFLFQDTS…SQCPDLNRTC (174 aa). Residues 270-329 form the VWFC 1 domain; that stretch reads RSCTVKGNIYRELESWMDGCKKCTCTNGTAQCETLTCSAPNCLSGFSPAYVPGKCCKECQ. One can recognise an EGF-like 1 domain in the interval 395 to 437; it reads GHDFCSEGHNCMGYSICKNLDDKAVCICRDGFRALREDNAYCE. 3 disulfides stabilise this stretch: Cys-399-Cys-411, Cys-405-Cys-420, and Cys-422-Cys-436. The Ca(2+) site is built by Asp-438, Ile-439, and Glu-441. Positions 438-479 constitute an EGF-like 2; calcium-binding domain; it reads DIDECTEGRHYCRENTVCVNTPGSFMCVCQTGYLKIDDYSCT. 9 disulfides stabilise this stretch: Cys-442–Cys-455, Cys-449–Cys-464, Cys-466–Cys-478, Cys-484–Cys-497, Cys-491–Cys-506, Cys-508–Cys-519, Cys-523–Cys-533, Cys-527–Cys-539, and Cys-541–Cys-550. Asn-457, Thr-458, and Ser-461 together coordinate Ca(2+). Residues 480 to 520 enclose the EGF-like 3; calcium-binding domain; it reads EHNECATNQHSCDENAMCFNTVGGHNCVCQPGYTGNGTDCR. The N-linked (GlcNAc...) asparagine glycan is linked to Asn-515. Positions 521–551 constitute an EGF-like 4 domain; that stretch reads AFCKDGCRNGGTCIAPNICACPQGFTGPSCE. Ca(2+)-binding residues include Asp-553, Ile-554, and Glu-556. Residues 553–599 form the EGF-like 5; calcium-binding domain; that stretch reads DIDECTEGFVQCDSRANCINLPGWYHCECRDGYHDNGMFSLGGESCE. 3 cysteine pairs are disulfide-bonded: Cys-557/Cys-570, Cys-564/Cys-579, and Cys-581/Cys-598. The Ca(2+) site is built by Asn-572, Leu-573, and Trp-576. Residues Asp-600, Ile-601, and Glu-603 each contribute to the Ca(2+) site. The EGF-like 6; calcium-binding domain occupies 600-635; the sequence is DIDECATGRHSCSNDTVCFNLDGGFDCRCPHGKNCS. Cystine bridges form between Cys-604-Cys-617, Cys-611-Cys-626, and Cys-628-Cys-634. Asn-613 carries N-linked (GlcNAc...) asparagine glycosylation. Residues Asn-619, Leu-620, and Gly-623 each contribute to the Ca(2+) site. N-linked (GlcNAc...) asparagine glycosylation is present at Asn-633. VWFC domains follow at residues 636–691 and 696–754; these read GDCT…PECD and SQCL…PRCV.

As to quaternary structure, homotrimer.

It is found in the secreted. Functionally, may regulate neuronal differentiation, polarization and axon guidance. The protein is Protein kinase C-binding protein NELL2 (nell2.L) of Xenopus laevis (African clawed frog).